The sequence spans 345 residues: MLLLGLLLLTSALAGQRTGTRAESNLSSKLQLSSDKEQNGVQDPRHERVVTISGNGSIHSPKFPHTYPRNMVLVWRLVAVDENVRIQLTFDERFGLEDPEDDICKYDFVEVEEPSDGSVLGRWCGSGTVPGKQTSKGNHIRIRFVSDEYFPSEPGFCIHYSIIMPQVTETTSPSVLPPSSLSLDLLNNAVTAFSTLEELIRYLEPDRWQVDLDSLYKPTWQLLGKAFLYGKKSKVVNLNLLKEEVKLYSCTPRNFSVSIREELKRTDTIFWPGCLLVKRCGGNCACCLHNCNECQCVPRKVTKKYHEVLQLRPKTGVKGLHKSLTDVALEHHEECDCVCRGNAGG.

The N-terminal stretch at 1-22 (MLLLGLLLLTSALAGQRTGTRA) is a signal peptide. Polar residues predominate over residues 24–33 (SNLSSKLQLS). Residues 24 to 45 (SNLSSKLQLSSDKEQNGVQDPR) are disordered. N-linked (GlcNAc...) asparagine glycosylation is present at asparagine 25. The span at 34–45 (SDKEQNGVQDPR) shows a compositional bias: basic and acidic residues. The CUB domain occupies 46–163 (HERVVTISGN…PGFCIHYSII (118 aa)). An N-linked (GlcNAc...) asparagine glycan is attached at asparagine 55. Intrachain disulfides connect cysteine 104/cysteine 124, cysteine 250/cysteine 294, cysteine 280/cysteine 335, and cysteine 287/cysteine 337.

It belongs to the PDGF/VEGF growth factor family. Homodimer; disulfide-linked. Interacts with PDGFRA homodimers, and with heterodimers formed by PDGFRA and PDGFRB. Interacts (via CUB domain) with PLAT (via kringle domain). Post-translationally, proteolytic removal of the N-terminal CUB domain releasing the core domain is necessary for unmasking the receptor-binding epitopes of the core domain. Cleavage after basic residues in the hinge region (region connecting the CUB and growth factor domains) gives rise to the receptor-binding form. Cleaved by PLAT and PLG. In terms of processing, sumoylated by SUMO1. N-glycosylated. In terms of tissue distribution, mainly expressed in kidney, testis, liver, heart and brain (at protein level). Highly expressed in airway epithelium, interstitial cells and alveolar macrophages in the lung of mice overexpressing IL13. Expressed in the ovaries.

The protein localises to the cytoplasm. It localises to the cytosol. The protein resides in the secreted. Its subcellular location is the nucleus. It is found in the cytoplasmic granule. The protein localises to the cell membrane. Functionally, growth factor that plays an essential role in the regulation of embryonic development, cell proliferation, cell migration, survival and chemotaxis. Potent mitogen and chemoattractant for cells of mesenchymal origin. Required for normal skeleton formation during embryonic development, especially for normal development of the craniofacial skeleton and for normal development of the palate. Required for normal skin morphogenesis during embryonic development. Plays an important role in wound healing, where it appears to be involved in three stages: inflammation, proliferation and remodeling. Plays an important role in angiogenesis and blood vessel development. Involved in fibrotic processes, in which transformation of interstitial fibroblasts into myofibroblasts plus collagen deposition occurs. The CUB domain has mitogenic activity in coronary artery smooth muscle cells, suggesting a role beyond the maintenance of the latency of the PDGF domain. In the nucleus, PDGFC seems to have additional function. This is Platelet-derived growth factor C (Pdgfc) from Mus musculus (Mouse).